The following is a 364-amino-acid chain: 3-isopropylmalate dehydrogenase (364 aa).

Residue 78–89 (GPKWGTGAVRPE) coordinates NAD(+). Arg-96, Arg-106, Arg-135, and Asp-224 together coordinate substrate. Residues Asp-224, Asp-249, and Asp-253 each contribute to the Mg(2+) site. 288-299 (GSAPDLPANKVN) contacts NAD(+).

Belongs to the isocitrate and isopropylmalate dehydrogenases family. Homodimer. It depends on Mg(2+) as a cofactor. Requires Mn(2+) as cofactor.

Its subcellular location is the cytoplasm. It carries out the reaction (2R,3S)-3-isopropylmalate + NAD(+) = 4-methyl-2-oxopentanoate + CO2 + NADH. It participates in amino-acid biosynthesis; L-leucine biosynthesis; L-leucine from 3-methyl-2-oxobutanoate: step 3/4. In terms of biological role, catalyzes the oxidation of 3-carboxy-2-hydroxy-4-methylpentanoate (3-isopropylmalate) to 3-carboxy-4-methyl-2-oxopentanoate. The product decarboxylates to 4-methyl-2 oxopentanoate. This chain is 3-isopropylmalate dehydrogenase (LEU2), found in Wickerhamomyces anomalus (strain ATCC 8168 / CBS 5759 / DSM 6766 / JCM 3585 / IAM 12210 / NCYC 432 / NBRC 10213 / NRRL Y-366 / AJ 5027) (Yeast).